The chain runs to 68 residues: Bifunctional protein GlmU (68 aa).

UDP-N-acetyl-alpha-D-glucosamine is bound by residues 9-12 (LAAG) and Lys23.

This sequence in the N-terminal section; belongs to the N-acetylglucosamine-1-phosphate uridyltransferase family. The protein in the C-terminal section; belongs to the transferase hexapeptide repeat family. Homotrimer. Requires Mg(2+) as cofactor.

It is found in the cytoplasm. The enzyme catalyses alpha-D-glucosamine 1-phosphate + acetyl-CoA = N-acetyl-alpha-D-glucosamine 1-phosphate + CoA + H(+). The catalysed reaction is N-acetyl-alpha-D-glucosamine 1-phosphate + UTP + H(+) = UDP-N-acetyl-alpha-D-glucosamine + diphosphate. The protein operates within nucleotide-sugar biosynthesis; UDP-N-acetyl-alpha-D-glucosamine biosynthesis; N-acetyl-alpha-D-glucosamine 1-phosphate from alpha-D-glucosamine 6-phosphate (route II): step 2/2. It participates in nucleotide-sugar biosynthesis; UDP-N-acetyl-alpha-D-glucosamine biosynthesis; UDP-N-acetyl-alpha-D-glucosamine from N-acetyl-alpha-D-glucosamine 1-phosphate: step 1/1. Its pathway is bacterial outer membrane biogenesis; LPS lipid A biosynthesis. Catalyzes the last two sequential reactions in the de novo biosynthetic pathway for UDP-N-acetylglucosamine (UDP-GlcNAc). The C-terminal domain catalyzes the transfer of acetyl group from acetyl coenzyme A to glucosamine-1-phosphate (GlcN-1-P) to produce N-acetylglucosamine-1-phosphate (GlcNAc-1-P), which is converted into UDP-GlcNAc by the transfer of uridine 5-monophosphate (from uridine 5-triphosphate), a reaction catalyzed by the N-terminal domain. The chain is Bifunctional protein GlmU (glmU) from Priestia megaterium (Bacillus megaterium).